The chain runs to 478 residues: Chromosomal replication initiator protein DnaA (478 aa).

The interval 1 to 71 (MNLTHIWKTT…RNALTRVVGY (71 aa)) is domain I, interacts with DnaA modulators. Residues 71 to 136 (YPVQVQVLIA…LDLASAMRSG (66 aa)) form a domain II region. The tract at residues 137 to 353 (MLNPRYTFAS…GSLNRVAAYA (217 aa)) is domain III, AAA+ region. ATP contacts are provided by glycine 181, glycine 183, lysine 184, and threonine 185. Positions 354–478 (ELNRLPITID…RERIQMMRGL (125 aa)) are domain IV, binds dsDNA.

This sequence belongs to the DnaA family. Oligomerizes as a right-handed, spiral filament on DNA at oriC.

It localises to the cytoplasm. In terms of biological role, plays an essential role in the initiation and regulation of chromosomal replication. ATP-DnaA binds to the origin of replication (oriC) to initiate formation of the DNA replication initiation complex once per cell cycle. Binds the DnaA box (a 9 base pair repeat at the origin) and separates the double-stranded (ds)DNA. Forms a right-handed helical filament on oriC DNA; dsDNA binds to the exterior of the filament while single-stranded (ss)DNA is stabiized in the filament's interior. The ATP-DnaA-oriC complex binds and stabilizes one strand of the AT-rich DNA unwinding element (DUE), permitting loading of DNA polymerase. After initiation quickly degrades to an ADP-DnaA complex that is not apt for DNA replication. Binds acidic phospholipids. This chain is Chromosomal replication initiator protein DnaA, found in Chloroflexus aggregans (strain MD-66 / DSM 9485).